The following is a 485-amino-acid chain: GTPase Der (485 aa).

EngA-type G domains lie at 3–167 and 176–349; these read PTIA…PEPE and PVFA…NAAM. GTP contacts are provided by residues 9 to 16, 56 to 60, 119 to 122, 182 to 189, 229 to 233, and 294 to 297; these read GRPNVGKS, DTGGF, NKGE, DTAGV, and NKWD. Positions 350–434 constitute a KH-like domain; the sequence is IKMPTPKITR…PLRIQYNVSE (85 aa). Positions 435–485 are disordered; sequence NPYENAEDKPKKKPLRRVSLSNRIEKREGRKEEKNRFKKKTKVSVKKQFSK. Residues 457–469 are compositionally biased toward basic and acidic residues; sequence RIEKREGRKEEKN. Residues 470–485 are compositionally biased toward basic residues; sequence RFKKKTKVSVKKQFSK.

It belongs to the TRAFAC class TrmE-Era-EngA-EngB-Septin-like GTPase superfamily. EngA (Der) GTPase family. As to quaternary structure, associates with the 50S ribosomal subunit.

In terms of biological role, GTPase that plays an essential role in the late steps of ribosome biogenesis. The chain is GTPase Der from Neisseria meningitidis serogroup C / serotype 2a (strain ATCC 700532 / DSM 15464 / FAM18).